The following is a 150-amino-acid chain: Leukotriene C4 synthase (150 aa).

Residues 1–6 (MKDEVA) lie on the Cytoplasmic side of the membrane. The helical transmembrane segment at 7–27 (LLATVTLVGVLLQAYFSLQVI) threads the bilayer. Over 28–48 (SARRAFHVSPPLTSGPPEFER) the chain is Lumenal. Residue Arg-30 coordinates glutathione. Arg-31 (proton donor) is an active-site residue. The residue at position 36 (Ser-36) is a Phosphoserine. The helical transmembrane segment at 49–69 (VFRAQVNCSEYFPLFLATLWV) threads the bilayer. Glutathione-binding positions include 51-55 (RAQVN), Gln-53, and 58-59 (EY). Residues 70–73 (AGIF) are Cytoplasmic-facing. A helical transmembrane segment spans residues 74–94 (FHEGAAALCGLFYLFARLRYF). A glutathione-binding site is contributed by 93–97 (YFQGY). Topologically, residues 95–104 (QGYARSAQLR) are lumenal. Arg-104 (proton acceptor) is an active-site residue. Residues 105–124 (LTPLYASARALWLLVAMAAL) traverse the membrane as a helical segment. The Cytoplasmic portion of the chain corresponds to 125 to 150 (GLLVHFLPGTLRTALFRWLQMLLPMA).

The protein belongs to the MAPEG family. As to quaternary structure, homotrimer. Interacts with ALOX5AP and ALOX5. In terms of processing, phosphorylation at Ser-36 by RPS6KB1 inhibits the leukotriene-C4 synthase activity. As to expression, widely expressed.

The protein resides in the nucleus outer membrane. It is found in the endoplasmic reticulum membrane. Its subcellular location is the nucleus membrane. The enzyme catalyses leukotriene C4 = leukotriene A4 + glutathione. It carries out the reaction (13S,14S)-epoxy-(4Z,7Z,9E,11E,16Z,19Z)-docosahexaenoate + glutathione = (13R)-S-glutathionyl-(14S)-hydroxy-(4Z,7Z,9E,11E,16Z,19Z)-docosahexaenoate. The protein operates within lipid metabolism; leukotriene C4 biosynthesis. Its activity is regulated as follows. Inhibited by MK886. Catalyzes the conjugation of leukotriene A4 with reduced glutathione (GSH) to form leukotriene C4 with high specificity. Can also catalyze the transfer of a glutathionyl group from glutathione (GSH) to 13(S),14(S)-epoxy-docosahexaenoic acid to form maresin conjugate in tissue regeneration 1 (MCTR1), a bioactive lipid mediator that possess potent anti-inflammatory and proresolving actions. The polypeptide is Leukotriene C4 synthase (Ltc4s) (Mus musculus (Mouse)).